The sequence spans 285 residues: Phosphatidylserine decarboxylase proenzyme (285 aa).

Catalysis depends on charge relay system; for autoendoproteolytic cleavage activity residues Asp89, His146, and Ser252. Catalysis depends on Ser252, which acts as the Schiff-base intermediate with substrate; via pyruvic acid; for decarboxylase activity. Pyruvic acid (Ser); by autocatalysis is present on Ser252.

The protein belongs to the phosphatidylserine decarboxylase family. PSD-B subfamily. Prokaryotic type I sub-subfamily. In terms of assembly, heterodimer of a large membrane-associated beta subunit and a small pyruvoyl-containing alpha subunit. Requires pyruvate as cofactor. Post-translationally, is synthesized initially as an inactive proenzyme. Formation of the active enzyme involves a self-maturation process in which the active site pyruvoyl group is generated from an internal serine residue via an autocatalytic post-translational modification. Two non-identical subunits are generated from the proenzyme in this reaction, and the pyruvate is formed at the N-terminus of the alpha chain, which is derived from the carboxyl end of the proenzyme. The autoendoproteolytic cleavage occurs by a canonical serine protease mechanism, in which the side chain hydroxyl group of the serine supplies its oxygen atom to form the C-terminus of the beta chain, while the remainder of the serine residue undergoes an oxidative deamination to produce ammonia and the pyruvoyl prosthetic group on the alpha chain. During this reaction, the Ser that is part of the protease active site of the proenzyme becomes the pyruvoyl prosthetic group, which constitutes an essential element of the active site of the mature decarboxylase.

The protein localises to the cell membrane. It catalyses the reaction a 1,2-diacyl-sn-glycero-3-phospho-L-serine + H(+) = a 1,2-diacyl-sn-glycero-3-phosphoethanolamine + CO2. It participates in phospholipid metabolism; phosphatidylethanolamine biosynthesis; phosphatidylethanolamine from CDP-diacylglycerol: step 2/2. Catalyzes the formation of phosphatidylethanolamine (PtdEtn) from phosphatidylserine (PtdSer). This is Phosphatidylserine decarboxylase proenzyme from Vibrio campbellii (strain ATCC BAA-1116).